Consider the following 418-residue polypeptide: Serine hydroxymethyltransferase (418 aa).

Residues Leu121 and 125–127 (GHL) contribute to the (6S)-5,6,7,8-tetrahydrofolate site. Residue Lys230 is modified to N6-(pyridoxal phosphate)lysine. (6S)-5,6,7,8-tetrahydrofolate contacts are provided by residues Glu246 and 355–357 (SPF).

Belongs to the SHMT family. As to quaternary structure, homodimer. Pyridoxal 5'-phosphate serves as cofactor.

It localises to the cytoplasm. It catalyses the reaction (6R)-5,10-methylene-5,6,7,8-tetrahydrofolate + glycine + H2O = (6S)-5,6,7,8-tetrahydrofolate + L-serine. It participates in one-carbon metabolism; tetrahydrofolate interconversion. The protein operates within amino-acid biosynthesis; glycine biosynthesis; glycine from L-serine: step 1/1. Catalyzes the reversible interconversion of serine and glycine with tetrahydrofolate (THF) serving as the one-carbon carrier. This reaction serves as the major source of one-carbon groups required for the biosynthesis of purines, thymidylate, methionine, and other important biomolecules. Also exhibits THF-independent aldolase activity toward beta-hydroxyamino acids, producing glycine and aldehydes, via a retro-aldol mechanism. This Streptococcus pneumoniae serotype 19F (strain G54) protein is Serine hydroxymethyltransferase.